The chain runs to 256 residues: Small ribosomal subunit protein eS1 (256 aa).

Ala2 is modified (N-acetylalanine; partial).

Belongs to the eukaryotic ribosomal protein eS1 family. In terms of assembly, component of the small ribosomal subunit. Mature ribosomes consist of a small (40S) and a large (60S) subunit. The 40S subunit contains about 33 different proteins and 1 molecule of RNA (18S). The 60S subunit contains about 49 different proteins and 3 molecules of RNA (25S, 5.8S and 5S).

The protein resides in the cytoplasm. The protein is Small ribosomal subunit protein eS1 of Candida albicans (strain SC5314 / ATCC MYA-2876) (Yeast).